The primary structure comprises 206 residues: Small ribosomal subunit protein uS4 (206 aa).

A disordered region spans residues 28 to 52; the sequence is YLDRRPYAPGQHGQRRGRGRPSDYS. Residues 96–171 enclose the S4 RNA-binding domain; that stretch reads RRLDNVVFRM…QKRRRVSPWI (76 aa).

It belongs to the universal ribosomal protein uS4 family. As to quaternary structure, part of the 30S ribosomal subunit. Contacts protein S5. The interaction surface between S4 and S5 is involved in control of translational fidelity.

Its function is as follows. One of the primary rRNA binding proteins, it binds directly to 16S rRNA where it nucleates assembly of the body of the 30S subunit. With S5 and S12 plays an important role in translational accuracy. This Deinococcus geothermalis (strain DSM 11300 / CIP 105573 / AG-3a) protein is Small ribosomal subunit protein uS4.